A 659-amino-acid polypeptide reads, in one-letter code: Mitochondrial Rho GTPase 1 (659 aa).

At 1–631 (MTKTRIRIVV…LTNDIDYRQT (631 aa)) the chain is on the cytoplasmic side. The 181-residue stretch at 3 to 183 (KTRIRIVVCG…FYLCQRTITN (181 aa)) folds into the Miro 1 domain. GTP is bound by residues 12–19 (GDSGVGKT), 61–63 (DTG), and 115–118 (NKCD). 2 EF-hand domains span residues 199–234 (LGVL…CFSK) and 328–363 (LGYR…TPGL). Ca(2+)-binding residues include Asp212, Asp214, Asp216, Glu223, Asp341, Asp343, Asp345, and Glu352. Positions 444–609 (RKVLNCYMLG…FIKLTEVALE (166 aa)) constitute a Miro 2 domain. GTP-binding positions include 453–460 (GKGNSGKS), 489–493 (ELKGG), and 558–561 (LKAD). The helical; Anchor for type IV membrane protein transmembrane segment at 632-652 (IVAISSVVGFASLFTFTALKI) threads the bilayer. Topologically, residues 653–659 (YSSFKNT) are mitochondrial intermembrane.

This sequence belongs to the mitochondrial Rho GTPase family.

The protein resides in the mitochondrion outer membrane. In terms of biological role, mitochondrial GTPase involved in mitochondrial trafficking. Probably involved in control of anterograde transport of mitochondria and their subcellular distribution. This chain is Mitochondrial Rho GTPase 1 (GEM1), found in Kluyveromyces lactis (strain ATCC 8585 / CBS 2359 / DSM 70799 / NBRC 1267 / NRRL Y-1140 / WM37) (Yeast).